A 415-amino-acid polypeptide reads, in one-letter code: Gamma-glutamyl phosphate reductase (415 aa).

The protein belongs to the gamma-glutamyl phosphate reductase family.

Its subcellular location is the cytoplasm. It catalyses the reaction L-glutamate 5-semialdehyde + phosphate + NADP(+) = L-glutamyl 5-phosphate + NADPH + H(+). It functions in the pathway amino-acid biosynthesis; L-proline biosynthesis; L-glutamate 5-semialdehyde from L-glutamate: step 2/2. Catalyzes the NADPH-dependent reduction of L-glutamate 5-phosphate into L-glutamate 5-semialdehyde and phosphate. The product spontaneously undergoes cyclization to form 1-pyrroline-5-carboxylate. The protein is Gamma-glutamyl phosphate reductase of Bacillus cereus (strain B4264).